A 441-amino-acid chain; its full sequence is MMEGVRRAVAKFLRGGGVYEKAVDAFVKDLQRELIKADVNVKLVLNVTRRIKERALKEEPPPGVTRRDWMIKIVYEELVKLFGGDQEPQVDPPKTPWIVLLVGVQGSGKTTTAGKLAYYYVRRGYKVGLVSSDTHRPGAYEQLKRLAEEAGAMFYGEREGDPAEIARRGLEDLLSRGAEIVIVDTAGRHGHGEEARLLDEMKAIASKVRPDEVALVIDASIGQKAMGLAERFHKSTPIGSIIVTKMDGTARGGGALTAAAVTGARIKFIGTGETLGELEPFAPRRFVARILGMGDLESLLERIKSLEEAGELDRAAEDVLKGRITMRTIYRQLRAMRKLGPLGKVLQMLPGASMLASIDEGALKLGEEKMKRWMAIIESMTYEELDRPEIIDKRRMRRIAIGSGTSVDDVRELLVYYKNLKTMMKKLKRDKRLLRRLGMEL.

GTP-binding positions include glycine 103–threonine 110, aspartate 184–arginine 188, and threonine 244–aspartate 247.

The protein belongs to the GTP-binding SRP family. SRP54 subfamily. As to quaternary structure, part of the signal recognition particle protein translocation system, which is composed of SRP and FtsY. Archaeal SRP consists of a 7S RNA molecule of 300 nucleotides and two protein subunits: SRP54 and SRP19.

Its subcellular location is the cytoplasm. It carries out the reaction GTP + H2O = GDP + phosphate + H(+). Functionally, involved in targeting and insertion of nascent membrane proteins into the cytoplasmic membrane. Binds to the hydrophobic signal sequence of the ribosome-nascent chain (RNC) as it emerges from the ribosomes. The SRP-RNC complex is then targeted to the cytoplasmic membrane where it interacts with the SRP receptor FtsY. In Aeropyrum pernix (strain ATCC 700893 / DSM 11879 / JCM 9820 / NBRC 100138 / K1), this protein is Signal recognition particle 54 kDa protein.